Here is a 425-residue protein sequence, read N- to C-terminus: CDP-diacylglycerol--serine O-phosphatidyltransferase 1 (425 aa).

Positions 1 to 16 (MEPNGYRKERRKEQHL) are enriched in basic and acidic residues. Residues 1-23 (MEPNGYRKERRKEQHLGRMNGGG) form a disordered region. 9 consecutive transmembrane segments (helical) span residues 42 to 62 (TISL…ALDP), 79 to 99 (WAMI…TVLI), 105 to 125 (IWRL…FLLF), 197 to 217 (PLLW…RHML), 227 to 247 (SIVL…MYTV), 296 to 316 (FIQV…TFFL), 321 to 341 (WIPP…LIAI), 361 to 381 (GAFC…CIKF), and 390 to 410 (MPLW…AFLL).

Belongs to the CDP-alcohol phosphatidyltransferase class-I family. Expressed in trichomes, leaf veins and root vasculature.

The protein resides in the endoplasmic reticulum membrane. It localises to the nucleus envelope. It catalyses the reaction a CDP-1,2-diacyl-sn-glycerol + L-serine = a 1,2-diacyl-sn-glycero-3-phospho-L-serine + CMP + H(+). It functions in the pathway phospholipid metabolism; phosphatidylethanolamine biosynthesis; phosphatidylethanolamine from CDP-diacylglycerol: step 1/2. Catalyzes a base-exchange reaction in which the polar head group of phosphatidylethanolamine (PE) or phosphatidylcholine (PC) is replaced by L-serine. Is essential for phosphatidylserine (PS) biosynthesis and PE seems to be the most plausible substrate. Plays an important role in microspore maturation. The sequence is that of CDP-diacylglycerol--serine O-phosphatidyltransferase 1 (PSS1) from Arabidopsis thaliana (Mouse-ear cress).